The chain runs to 595 residues: UvrABC system protein C (595 aa).

A GIY-YIG domain is found at 14–91; the sequence is NNPGCYLHKD…IQENMPKFNI (78 aa). The 36-residue stretch at 196-231 folds into the UVR domain; sequence DKIVNQLKAKMKDMSDQMEFERAAEYRDLIEAVSTL.

It belongs to the UvrC family. As to quaternary structure, interacts with UvrB in an incision complex.

The protein resides in the cytoplasm. Its function is as follows. The UvrABC repair system catalyzes the recognition and processing of DNA lesions. UvrC both incises the 5' and 3' sides of the lesion. The N-terminal half is responsible for the 3' incision and the C-terminal half is responsible for the 5' incision. This Streptococcus thermophilus (strain ATCC BAA-250 / LMG 18311) protein is UvrABC system protein C.